The sequence spans 319 residues: Putative peptide permease protein BRA0408/BS1330_II0405 (319 aa).

6 consecutive transmembrane segments (helical) span residues 9-29, 102-122, 138-158, 182-202, 242-262, and 284-304; these read LLIGLGMLLALTILIFVLLQL, LLLMAAGLAIAIVIGVTTGII, LALLGISSPAFLTALLGLYVF, LLRHLALPALVLSIGHAALIM, LPVVTLIGSTIGLAVGGAIFI, and YPVIMGATLVIGACVIIVNIL. Residues 98-305 enclose the ABC transmembrane type-1 domain; that stretch reads IGPTLLLMAA…ACVIIVNILT (208 aa).

Belongs to the binding-protein-dependent transport system permease family. The complex is composed of two ATP-binding proteins (BRA0404 and BRA0405), two transmembrane proteins (BRA0407 and BRA0408) and a solute-binding protein (BRA0409).

The protein resides in the cell inner membrane. Functionally, probably part of an ABC transporter complex that could be involved in peptide import. Probably responsible for the translocation of the substrate across the membrane. In Brucella suis biovar 1 (strain 1330), this protein is Putative peptide permease protein BRA0408/BS1330_II0405.